Here is a 148-residue protein sequence, read N- to C-terminus: Calmodulin (148 aa).

A2 carries the N-acetylalanine modification. EF-hand domains lie at D8 to N43, P44 to D79, D81 to K116, and K116 to K148. Positions 21, 23, 25, 27, 32, 57, 59, 61, 63, 68, 94, 96, 98, and 105 each coordinate Ca(2+). The residue at position 116 (K116) is an N6,N6,N6-trimethyllysine. Residues D129, D131, D133, Q135, and E140 each contribute to the Ca(2+) site.

It belongs to the calmodulin family.

Its function is as follows. Calmodulin mediates the control of a large number of enzymes, ion channels and other proteins by Ca(2+). Among the enzymes to be stimulated by the calmodulin-Ca(2+) complex are a number of protein kinases and phosphatases. The polypeptide is Calmodulin (CAMF1) (Fagus sylvatica (Beechnut)).